A 209-amino-acid chain; its full sequence is MDGVTVIDHPLVQHKLTIMRRKETSTGSFRRLLREISTLLCYEVTRDLELTMETIETPLQTIESPILEGKKLVFASILRAGNGLLEGMLDLVPSARVSHIGVYRDHETLQPVEYYFKAPEDVAERLIIVVDPMLATGNSSIAAIDKLKERGAHNIRFLCLLAAPEGIRNFRAAHPDVPVFTAAIDSHLNEKGYIVPGLGDAGDRMYGTK.

Residues Arg79, Arg104, and 131–139 each bind 5-phospho-alpha-D-ribose 1-diphosphate; that span reads DPMLATGNS. Uracil-binding positions include Ile194 and 199-201; that span reads GDA. 5-phospho-alpha-D-ribose 1-diphosphate is bound at residue Asp200.

It belongs to the UPRTase family. Requires Mg(2+) as cofactor.

The enzyme catalyses UMP + diphosphate = 5-phospho-alpha-D-ribose 1-diphosphate + uracil. Its pathway is pyrimidine metabolism; UMP biosynthesis via salvage pathway; UMP from uracil: step 1/1. Its activity is regulated as follows. Allosterically activated by GTP. Functionally, catalyzes the conversion of uracil and 5-phospho-alpha-D-ribose 1-diphosphate (PRPP) to UMP and diphosphate. In Rhizobium etli (strain CIAT 652), this protein is Uracil phosphoribosyltransferase.